A 314-amino-acid chain; its full sequence is Phospholipid phosphatase-related protein type 5 (314 aa).

6 helical membrane-spanning segments follow: residues 5–25 (FSLT…VMLA), 61–81 (IPPV…IIVG), 120–140 (FLGI…AGQV), 194–214 (AALS…TIKA), 223–243 (VLCL…VAEY), and 250–270 (VIAG…CVVN).

Belongs to the PA-phosphatase related phosphoesterase family.

Its subcellular location is the cell membrane. Functionally, induces filopodia formation and promotes neurite growth. This chain is Phospholipid phosphatase-related protein type 5, found in Xenopus laevis (African clawed frog).